Here is a 663-residue protein sequence, read N- to C-terminus: Endopolyphosphatase (663 aa).

At 1–14 (MAVNEKDVGRKSRV) the chain is on the cytoplasmic side. The helical; Signal-anchor for type II membrane protein transmembrane segment at 15–35 (SVVLWVFIALGTLFLCKNAFT) threads the bilayer. Topologically, residues 36–663 (FSSESIHGLK…ISTGYEDERN (628 aa)) are vacuolar. N-linked (GlcNAc...) asparagine glycans are attached at residues asparagine 487 and asparagine 526. Positions 534-564 (SAEQNKKKKKKNGKPDKSIPRKKPDELPAGP) are disordered. A compositionally biased stretch (basic and acidic residues) spans 546–559 (GKPDKSIPRKKPDE).

Belongs to the endopolyphosphatase PPN1 family. A divalent metal cation is required as a cofactor. Processing by proteases in the vacuole may be required for activation.

It localises to the vacuole membrane. It carries out the reaction [phosphate](n+1) + n H2O = (n+1) phosphate + n H(+). Functionally, catalyzes the hydrolysis of inorganic polyphosphate (polyP) chains of many hundreds of phosphate residues into shorter lengths. The polypeptide is Endopolyphosphatase (PPN1) (Candida glabrata (strain ATCC 2001 / BCRC 20586 / JCM 3761 / NBRC 0622 / NRRL Y-65 / CBS 138) (Yeast)).